The chain runs to 98 residues: Protein E7 (98 aa).

Methionine 1 is covalently cross-linked (Peptide (Met-Gly) (interchain with G-Cter in ubiquitin); by host). The tract at residues 1–41 (MRGNNPTLREYILDLHPEPTDLFCYEQLCDSSDEDEIGLDG) is E7 terminal domain. Positions 22–26 (LFCYE) match the LXCXE motif; interaction with host RB1 and TMEM173/STING motif. The segment at 59–95 (CYTCGTTVRLCINSTTTDVRTLQQLLMGTCTIVCPSC) is a zinc-finger region. Residues 77–85 (VRTLQQLLM) carry the Nuclear export signal motif.

The protein belongs to the papillomaviridae E7 protein family. In terms of assembly, homodimer. Homooligomer. Interacts with host RB1; this interaction induces dissociation of RB1-E2F1 complex thereby disrupting RB1 activity. Interacts with host EP300; this interaction represses EP300 transcriptional activity. Interacts with protein E2; this interaction inhibits E7 oncogenic activity. Interacts with host TMEM173/STING; this interaction impairs the ability of TMEM173/STING to sense cytosolic DNA and promote the production of type I interferon (IFN-alpha and IFN-beta). Highly phosphorylated.

It is found in the host cytoplasm. The protein resides in the host nucleus. In terms of biological role, plays a role in viral genome replication by driving entry of quiescent cells into the cell cycle. Stimulation of progression from G1 to S phase allows the virus to efficiently use the cellular DNA replicating machinery to achieve viral genome replication. E7 protein has both transforming and trans-activating activities. Induces the disassembly of the E2F1 transcription factor from RB1, with subsequent transcriptional activation of E2F1-regulated S-phase genes. Interferes with host histone deacetylation mediated by HDAC1 and HDAC2, leading to transcription activation. Also plays a role in the inhibition of both antiviral and antiproliferative functions of host interferon alpha. Interaction with host TMEM173/STING impairs the ability of TMEM173/STING to sense cytosolic DNA and promote the production of type I interferon (IFN-alpha and IFN-beta). In Homo sapiens (Human), this protein is Protein E7.